A 124-amino-acid polypeptide reads, in one-letter code: Small ribosomal subunit protein uS12 (124 aa).

Residues 1 to 32 (MPTINQLVRKGRRDKTAKVKTAALKGSPQRRG) are disordered. The residue at position 89 (Asp-89) is a 3-methylthioaspartic acid. Positions 104 to 124 (TQGVKGRKQARSRYGAKKEKS) are disordered. Residues 108-118 (KGRKQARSRYG) are compositionally biased toward basic residues.

This sequence belongs to the universal ribosomal protein uS12 family. Part of the 30S ribosomal subunit. Contacts proteins S8 and S17. May interact with IF1 in the 30S initiation complex.

Functionally, with S4 and S5 plays an important role in translational accuracy. In terms of biological role, interacts with and stabilizes bases of the 16S rRNA that are involved in tRNA selection in the A site and with the mRNA backbone. Located at the interface of the 30S and 50S subunits, it traverses the body of the 30S subunit contacting proteins on the other side and probably holding the rRNA structure together. The combined cluster of proteins S8, S12 and S17 appears to hold together the shoulder and platform of the 30S subunit. The chain is Small ribosomal subunit protein uS12 from Rhodococcus jostii (strain RHA1).